We begin with the raw amino-acid sequence, 395 residues long: Elongation factor Tu (395 aa).

Positions 10 to 205 (KPHCNIGTIG…AVDSYIPQPE (196 aa)) constitute a tr-type G domain. Residues 19-26 (GHVDHGKT) are G1. 19 to 26 (GHVDHGKT) contributes to the GTP binding site. Threonine 26 is a Mg(2+) binding site. The G2 stretch occupies residues 60 to 64 (GITIA). The interval 81-84 (DCPG) is G3. GTP-binding positions include 81–85 (DCPGH) and 136–139 (NKMD). A G4 region spans residues 136 to 139 (NKMD). The interval 173–175 (SAL) is G5.

This sequence belongs to the TRAFAC class translation factor GTPase superfamily. Classic translation factor GTPase family. EF-Tu/EF-1A subfamily. In terms of assembly, monomer.

It is found in the cytoplasm. The catalysed reaction is GTP + H2O = GDP + phosphate + H(+). GTP hydrolase that promotes the GTP-dependent binding of aminoacyl-tRNA to the A-site of ribosomes during protein biosynthesis. In Acidiphilium cryptum (strain JF-5), this protein is Elongation factor Tu.